The following is a 316-amino-acid chain: tRNA-cytidine(32) 2-sulfurtransferase (316 aa).

Residues 58-63 carry the PP-loop motif motif; that stretch reads SGGKDS. Residues C133, C136, and C224 each contribute to the [4Fe-4S] cluster site.

The protein belongs to the TtcA family. Homodimer. Mg(2+) serves as cofactor. Requires [4Fe-4S] cluster as cofactor.

It localises to the cytoplasm. The enzyme catalyses cytidine(32) in tRNA + S-sulfanyl-L-cysteinyl-[cysteine desulfurase] + AH2 + ATP = 2-thiocytidine(32) in tRNA + L-cysteinyl-[cysteine desulfurase] + A + AMP + diphosphate + H(+). The protein operates within tRNA modification. Its function is as follows. Catalyzes the ATP-dependent 2-thiolation of cytidine in position 32 of tRNA, to form 2-thiocytidine (s(2)C32). The sulfur atoms are provided by the cysteine/cysteine desulfurase (IscS) system. The protein is tRNA-cytidine(32) 2-sulfurtransferase of Aromatoleum aromaticum (strain DSM 19018 / LMG 30748 / EbN1) (Azoarcus sp. (strain EbN1)).